A 192-amino-acid polypeptide reads, in one-letter code: Adenylate kinase (192 aa).

Glycine 10–threonine 15 contacts ATP. The interval serine 30–valine 59 is NMP. AMP is bound by residues threonine 31, arginine 36, threonine 57–valine 59, glycine 85–arginine 88, and glutamine 92. The interval lysine 126–aspartate 142 is LID. ATP is bound at residue arginine 127. AMP contacts are provided by arginine 139 and arginine 150. Isoleucine 178 contributes to the ATP binding site.

The protein belongs to the adenylate kinase family. As to quaternary structure, monomer.

The protein resides in the cytoplasm. It carries out the reaction AMP + ATP = 2 ADP. It functions in the pathway purine metabolism; AMP biosynthesis via salvage pathway; AMP from ADP: step 1/1. Catalyzes the reversible transfer of the terminal phosphate group between ATP and AMP. Plays an important role in cellular energy homeostasis and in adenine nucleotide metabolism. The protein is Adenylate kinase of Bartonella henselae (strain ATCC 49882 / DSM 28221 / CCUG 30454 / Houston 1) (Rochalimaea henselae).